Here is a 1383-residue protein sequence, read N- to C-terminus: MSSAGDSGPGYVLNDFDAVPRLSYARSIDIRDSLSDLIRIQRDSYDAFIGIDEGSSGGIQSIFQSMFPIRDPLGRAVLEFVSCNIGEPQYDEYECIKRGITFSVPMRITLRFVVWKVQEVSFKEVKYVVDEGTLERSVKYMKEQEVSIGDLPMMTSYGTFIINGIERVIVSQMHRSPGVFFDSDKGKTYSSGKLIYSARIIPYRGSWLDFEFDIKDIIYFRIDKKRKLPVTYLLKALGMSNNDILDTFYDKVLYVRSDKGWKVPFVVDRFKGVRLSYDLMDVDGNVLIKANTRITLRIAKKLYADGLREYLVPFAGISGLFVATDLVDPASGAVIVSAGEAIAAEHIVKLELFDISEIAFLNIDFLTVGPYVLNTLFLDRHITQEDALFEIYRVLRSGESPNLEAVKSFFKGLFFEPDRYDLSVVGRIKLNSHLRLDIDENLTVLTKDDIVHVIKKLVLLPDGEGVVDDIDHLGNRRVRSVGEFIENQFRVGILRLERMIMDYMSSVNFDNAVPCDFVNPKILATVLKDFFSSSQLSQFMDQTNPLSEVTHKRRLSALGPGGLTRERAGFEVRDVHPTHYGRICPIETPEGQNIGLISSLAIYAKINKYGFIESPYRKVIDGVVTDSVEYLLATQESDYYIADAGAALDENNRFVDDMLYCRHGGNFVMVKREDVNYIDVSPKQIVSVAASLIPFLENNDANRALMGSNMQRQAVPLLKAEAPLVGTGMESVVAAGSGAVVLAKRDGVVHRVDGSYIVIRAFDKNKDEYLGVDIYKLRKFQRSNHNTCINQRPIVKIGDYVRTNDVIADGAAIDRGELALGKNVLVAFMSWQGYNFEDSIVISSDVVKRDVFTSIHIEEFECVVRDTPLGPEKIMRSVPDVNEESLSHLDDVGIVNIGAEVSAGSVLVGKVTPRPPVSLPPETKLLVTIFGEKVFDCVDSSLYLPPDVEGTVIDVHVFVRRGVEENDRSLLIKQSEVNSFRKERDYEIDVVSEYFYDELKKLLCSADLPLNGHADVESLLAAKSLEALWEIGLSNPKISAKVADMKGKFDELITEAHSKFDQKIDKLNYGYDLPQGVLTIVKVFVAVKHNLQPGDKMAGRHGNKGVISRIVPVEDMPHLEDGTPVDIILNSLGVPSRMNIGQILETHLGWAAVNLGHRVGRMLDSGEEEGPVVESIRSFLSEVYEGQKLKEDVASMSDEALLKFANRLRRGVPMAAPVFEGPKDAQISRLLELADVDPSGQVDLYDGRSGQKFDRKVTVGYIYMLKLHHLVDDKIHARSVGPYGLVTQQPLGGKSHFGGQRFGEMECWALQAYGAAYTLQEMLTVKSDDIVGRVRIYESIIKGDSNFECGIPESFNVMVKELRSLCLDVVLKQDKEFTSSKVE.

This sequence belongs to the RNA polymerase beta chain family. In terms of assembly, the RNAP catalytic core consists of 2 alpha, 1 beta, 1 beta' and 1 omega subunit. When a sigma factor is associated with the core the holoenzyme is formed, which can initiate transcription.

It carries out the reaction RNA(n) + a ribonucleoside 5'-triphosphate = RNA(n+1) + diphosphate. Its function is as follows. DNA-dependent RNA polymerase catalyzes the transcription of DNA into RNA using the four ribonucleoside triphosphates as substrates. This is DNA-directed RNA polymerase subunit beta from Anaplasma phagocytophilum (strain HZ).